We begin with the raw amino-acid sequence, 283 residues long: Shikimate kinase (283 aa).

Residue 86 to 96 coordinates ATP; sequence PIKSGLSSSSA.

Belongs to the GHMP kinase family. Archaeal shikimate kinase subfamily.

The protein localises to the cytoplasm. It catalyses the reaction shikimate + ATP = 3-phosphoshikimate + ADP + H(+). Its pathway is metabolic intermediate biosynthesis; chorismate biosynthesis; chorismate from D-erythrose 4-phosphate and phosphoenolpyruvate: step 5/7. In Methanococcus maripaludis (strain C5 / ATCC BAA-1333), this protein is Shikimate kinase.